Here is a 420-residue protein sequence, read N- to C-terminus: UDP-N-acetylglucosamine 1-carboxyvinyltransferase (420 aa).

23–24 (KN) contributes to the phosphoenolpyruvate binding site. Arginine 92 is a UDP-N-acetyl-alpha-D-glucosamine binding site. Residue cysteine 116 is the Proton donor of the active site. At cysteine 116 the chain carries 2-(S-cysteinyl)pyruvic acid O-phosphothioketal. Residues 121–125 (RPVDL), 161–164 (KVSV), aspartate 306, and isoleucine 328 contribute to the UDP-N-acetyl-alpha-D-glucosamine site.

Belongs to the EPSP synthase family. MurA subfamily.

It is found in the cytoplasm. It carries out the reaction phosphoenolpyruvate + UDP-N-acetyl-alpha-D-glucosamine = UDP-N-acetyl-3-O-(1-carboxyvinyl)-alpha-D-glucosamine + phosphate. The protein operates within cell wall biogenesis; peptidoglycan biosynthesis. Cell wall formation. Adds enolpyruvyl to UDP-N-acetylglucosamine. This chain is UDP-N-acetylglucosamine 1-carboxyvinyltransferase, found in Photobacterium profundum (strain SS9).